Consider the following 290-residue polypeptide: MKVINQTLLEKVIIERSRSSHKGDYGRLLLLGGTYPYGGAIIMAALAAVKNGAGLVTVGTDRENIPALHSHLPEAMAFALQDKQLLKEQLEKAEVVLLGPGLGDNAFGEDLVKQVFAGLKQNQILIVDGGALTILARTSLSFPSSQLILTPHQKEWEKLSGITIEKQKEDTTASALTSFPKGTILVEKGPATRVWQAGQSDYYQLQVGGPYQATGGMGDTLAGMIAGFVGQFRQASLYERVAVATHLHSAIAQELSQENYVVLPTEISRYLPKIMKIICQQERVSKDKLV.

Residues 5-278 (NQTLLEKVII…RYLPKIMKII (274 aa)) enclose the YjeF C-terminal domain. Residues Ala40, Gly103, and His152 each coordinate (6S)-NADPHX. Gly218 serves as a coordination point for AMP. Asp219 is a binding site for (6S)-NADPHX.

Belongs to the NnrD/CARKD family. In terms of assembly, homotetramer. The cofactor is Mg(2+).

It catalyses the reaction (6S)-NADHX + ADP = AMP + phosphate + NADH + H(+). It carries out the reaction (6S)-NADPHX + ADP = AMP + phosphate + NADPH + H(+). Its function is as follows. Catalyzes the dehydration of the S-form of NAD(P)HX at the expense of ADP, which is converted to AMP. Together with NAD(P)HX epimerase, which catalyzes the epimerization of the S- and R-forms, the enzyme allows the repair of both epimers of NAD(P)HX, a damaged form of NAD(P)H that is a result of enzymatic or heat-dependent hydration. This chain is ADP-dependent (S)-NAD(P)H-hydrate dehydratase, found in Streptococcus pneumoniae (strain ATCC BAA-255 / R6).